A 469-amino-acid polypeptide reads, in one-letter code: Argininosuccinate lyase (469 aa).

This sequence belongs to the lyase 1 family. Argininosuccinate lyase subfamily.

It localises to the cytoplasm. It catalyses the reaction 2-(N(omega)-L-arginino)succinate = fumarate + L-arginine. It participates in amino-acid biosynthesis; L-arginine biosynthesis; L-arginine from L-ornithine and carbamoyl phosphate: step 3/3. The chain is Argininosuccinate lyase from Polaromonas naphthalenivorans (strain CJ2).